The chain runs to 520 residues: Maturase K (520 aa).

Belongs to the intron maturase 2 family. MatK subfamily.

It localises to the plastid. Its subcellular location is the chloroplast. In terms of biological role, usually encoded in the trnK tRNA gene intron. Probably assists in splicing its own and other chloroplast group II introns. The protein is Maturase K of Aspidistra elatior (Cast-iron plant).